A 366-amino-acid chain; its full sequence is Galactoside alpha-(1,2)-fucosyltransferase 1 (366 aa).

At 1–8 (MWPRSHRH) the chain is on the cytoplasmic side. The chain crosses the membrane as a helical; Signal-anchor for type II membrane protein span at residues 9–25 (LCLAFLLVCVLSAISFL). The Lumenal segment spans residues 26–366 (IHFHQDSIRH…LSPLWPLAEP (341 aa)). Residues asparagine 66, asparagine 302, and asparagine 328 are each glycosylated (N-linked (GlcNAc...) asparagine).

This sequence belongs to the glycosyltransferase 11 family.

It localises to the golgi apparatus. The protein resides in the golgi stack membrane. The enzyme catalyses a beta-D-galactosyl-(1-&gt;4)-N-acetyl-beta-D-glucosaminyl derivative + GDP-beta-L-fucose = an alpha-L-Fuc-(1-&gt;2)-beta-D-Gal-(1-&gt;4)-beta-D-GlcNAc derivative + GDP + H(+). It catalyses the reaction a ganglioside GA1 + GDP-beta-L-fucose = a ganglioside Fuc-GA1 + GDP + H(+). It carries out the reaction a beta-D-Gal-(1-&gt;3)-beta-D-GlcNAc-(1-&gt;3)-beta-D-Gal-(1-&gt;4)-beta-D-Glc-(1&lt;-&gt;1')-Cer(d18:1(4E)) + GDP-beta-L-fucose = alpha-L-fucosyl-(1-&gt;2)- beta-D-galactosyl-(1-&gt;3)-N-acetyl-beta-D-glucosaminyl-(1-&gt;3)-beta-D-galactosyl-(1-&gt;4)-beta-D-glucosyl-(1&lt;-&gt;1')-N-acylsphing-4-enine + GDP + H(+). The catalysed reaction is a neolactoside nLc4Cer(d18:1(4E)) + GDP-beta-L-fucose = a neolactoside IV(2)-alpha-Fuc-nLc4Cer(d18:1(4E)) + GDP + H(+). The enzyme catalyses a ganglioside GM1 + GDP-beta-L-fucose = a ganglioside Fuc-GM1 + GDP + H(+). It catalyses the reaction beta-D-galactosyl-(1-&gt;3)-N-acetyl-D-galactosamine + GDP-beta-L-fucose = alpha-L-fucosyl-(1-&gt;2)-beta-D-galactosyl-(1-&gt;3)-N-acetyl-D-galactosamine + GDP + H(+). Its pathway is protein modification; protein glycosylation. Catalyzes the transfer of L-fucose, from a guanosine diphosphate-beta-L-fucose, to the terminal galactose residue of glycoconjugates through an alpha(1,2) linkage leading to H antigen synthesis that is an intermediate substrate in the synthesis of ABO blood group antigens. H antigen is essential for maturation of the glomerular layer of the main olfactory bulb, in cell migration and early cell-cell contacts during tumor associated angiogenesis. Preferentially fucosylates soluble lactose and to a lesser extent fucosylates glycolipids gangliosides GA1 and GM1a. The protein is Galactoside alpha-(1,2)-fucosyltransferase 1 of Saimiri boliviensis boliviensis (Bolivian squirrel monkey).